The sequence spans 294 residues: Acetylglutamate kinase (294 aa).

Residues 60 to 61 (GG), Arg82, and Asn186 each bind substrate.

Belongs to the acetylglutamate kinase family. ArgB subfamily.

The protein localises to the cytoplasm. The enzyme catalyses N-acetyl-L-glutamate + ATP = N-acetyl-L-glutamyl 5-phosphate + ADP. It functions in the pathway amino-acid biosynthesis; L-arginine biosynthesis; N(2)-acetyl-L-ornithine from L-glutamate: step 2/4. Functionally, catalyzes the ATP-dependent phosphorylation of N-acetyl-L-glutamate. The polypeptide is Acetylglutamate kinase (Methanospirillum hungatei JF-1 (strain ATCC 27890 / DSM 864 / NBRC 100397 / JF-1)).